Reading from the N-terminus, the 306-residue chain is Myb family transcription factor MOF1 (306 aa).

An HTH myb-type domain is found at 19-79; that stretch reads RSKVPRLRWT…HLQMYRCSRL (61 aa). Residues 50–75 constitute a DNA-binding region (H-T-H motif); that stretch reads PKLILQLMGVKGLTISHVKSHLQMYR.

As to quaternary structure, interacts with TPR1, TPR2 and TPR3. Expressed in roots, leaves, leaf sheaths, culms, panicles, lemmas, paleas, lodicules, stamens, and pistils.

It localises to the nucleus. In terms of biological role, transcriptional repressor that plays a role in the regulation of organ identity and spikelet meristem determinacy. Interacts with the TPR corepressors to possibly repress the expression of downstream target genes. The protein is Myb family transcription factor MOF1 of Oryza sativa subsp. japonica (Rice).